The chain runs to 117 residues: Large ribosomal subunit protein uL18 (117 aa).

The protein belongs to the universal ribosomal protein uL18 family. In terms of assembly, part of the 50S ribosomal subunit; part of the 5S rRNA/L5/L18/L25 subcomplex. Contacts the 5S and 23S rRNAs.

In terms of biological role, this is one of the proteins that bind and probably mediate the attachment of the 5S RNA into the large ribosomal subunit, where it forms part of the central protuberance. This chain is Large ribosomal subunit protein uL18, found in Pectobacterium atrosepticum (strain SCRI 1043 / ATCC BAA-672) (Erwinia carotovora subsp. atroseptica).